Consider the following 714-residue polypeptide: MFNTHKVEIEWGGRPLTLETGKIARQADGAVLATYGETAVLATVVSAKEPKPGQDFFPLTVNYQEKTYAAGKIPGGYFKREGRPSENETLVSRLIDRPIRPLFVDGYKNDTQVVITVLQHDLENNPDILSMVAASAALTISGVPFMGPISGARVGYIDGEYVLNPNIDEMPESKLDLVVAGTSEAVLMVESEAQELPEDVMLGAVMFGHKSFQPVIDAIIKLAEVAAKEPRDFQPEDLSELEAKVLAVVENDLREAYKITEKQARYAAVDAAKAKAEEHFFPEGVEETEMSAEQFATIFKHLQAKIVRWNILDTGNRIDGRDLSTVRPIVSEVGILPRTHGSALFTRGETQAIVVATLGTGEDEQMIDALTGTYKESFMLHYNFPPYSVGETGRMGSPGRREIGHGKLAWRAIHPMLPAAEQFPYTIRAVSEITESNGSSSMATVCGTSLALMDAGVPIVRPVAGIAMGLIKEGERFAVLSDILGDEDHLGDMDFKVAGTEFGITSLQMDIKIDGITEEIMKVALEQAKGGRVHILGEMAKAISSSRAELGEFAPRIEVMNIPTDKIRDVIGSGGKVIREIVEKTGAKINIEDDGTVKIASSNGKEIEAAKKWIHSIVAEPEVGEIYEGTVVKTADFGAFVNFFGPRDGLVHISQLAADRVAKTTDVVKEGQKVWVKLMGFDERGKVRLSMKVVDQETGKEIVAEKKKEEVDAE.

Residues Asp488 and Asp494 each contribute to the Mg(2+) site. The 60-residue stretch at 555-614 (PRIEVMNIPTDKIRDVIGSGGKVIREIVEKTGAKINIEDDGTVKIASSNGKEIEAAKKWI) folds into the KH domain. The region spanning 624–692 (GEIYEGTVVK…ERGKVRLSMK (69 aa)) is the S1 motif domain.

Belongs to the polyribonucleotide nucleotidyltransferase family. Requires Mg(2+) as cofactor.

The protein resides in the cytoplasm. It catalyses the reaction RNA(n+1) + phosphate = RNA(n) + a ribonucleoside 5'-diphosphate. Its function is as follows. Involved in mRNA degradation. Catalyzes the phosphorolysis of single-stranded polyribonucleotides processively in the 3'- to 5'-direction. This chain is Polyribonucleotide nucleotidyltransferase, found in Brucella melitensis biotype 2 (strain ATCC 23457).